Consider the following 319-residue polypeptide: Transaldolase (319 aa).

The Schiff-base intermediate with substrate role is filled by K126.

The protein belongs to the transaldolase family. Type 1 subfamily. As to quaternary structure, homodimer.

Its subcellular location is the cytoplasm. The catalysed reaction is D-sedoheptulose 7-phosphate + D-glyceraldehyde 3-phosphate = D-erythrose 4-phosphate + beta-D-fructose 6-phosphate. It participates in carbohydrate degradation; pentose phosphate pathway; D-glyceraldehyde 3-phosphate and beta-D-fructose 6-phosphate from D-ribose 5-phosphate and D-xylulose 5-phosphate (non-oxidative stage): step 2/3. Functionally, transaldolase is important for the balance of metabolites in the pentose-phosphate pathway. This chain is Transaldolase, found in Bordetella avium (strain 197N).